Consider the following 359-residue polypeptide: Peptide chain release factor 1 (359 aa).

Gln236 is subject to N5-methylglutamine. The disordered stretch occupies residues 286–305 (KKEMERSTMRKSQIGSGDRS).

The protein belongs to the prokaryotic/mitochondrial release factor family. In terms of processing, methylated by PrmC. Methylation increases the termination efficiency of RF1.

It localises to the cytoplasm. Its function is as follows. Peptide chain release factor 1 directs the termination of translation in response to the peptide chain termination codons UAG and UAA. The protein is Peptide chain release factor 1 of Wolbachia pipientis wMel.